The sequence spans 66 residues: Alpha-conotoxin GIB (66 aa).

A signal peptide spans 1–21; sequence MGMRMMFTVFLLVVLATTVVS. Residues 22–49 constitute a propeptide that is removed on maturation; it reads FPSERASDGRDDTAKDEGSDMEKLVEKK. 2 cysteine pairs are disulfide-bonded: Cys51–Cys56 and Cys52–Cys62. Gly64 is modified (glycine amide).

The protein belongs to the conotoxin A superfamily. Expressed by the venom duct.

The protein resides in the secreted. In terms of biological role, alpha-conotoxins act on postsynaptic membranes, they bind to the nicotinic acetylcholine receptors (nAChR) and thus inhibit them. Both the globular (with C1-C3; C2-C4 disulfide pattern) and ribbon (C1-C4; C2-C3) isomers reversibly inhibit human muscle-type alpha-1-beta-1-delta-epsilon/CHRNA1-CHRNB1-CHRND-CHRNE nAChRs (IC(50)=116 nM and IC(50)=643 nM, respectively). Both isomers also inhibit alpha-7/CHRNA7 and alpha-9-alpha-10/CHRNA9-CHRNA10 (IC(50)=1113 nM by globular isomer) nAChRs. In Conus geographus (Geography cone), this protein is Alpha-conotoxin GIB.